Reading from the N-terminus, the 169-residue chain is Thermonuclease (169 aa).

Residues 1 to 26 form the signal peptide; it reads MKKITTGLIIVVAAIIVLSIQFMTES. Catalysis depends on residues R65, E73, and R115.

The protein belongs to the thermonuclease family. Ca(2+) serves as cofactor.

It localises to the secreted. The catalysed reaction is Endonucleolytic cleavage to nucleoside 3'-phosphates and 3'-phosphooligonucleotide end-products.. Enzyme that catalyzes the hydrolysis of both DNA and RNA at the 5'-position of the phosphodiester bond. This chain is Thermonuclease (nucH), found in Staphylococcus hyicus.